Consider the following 608-residue polypeptide: uncharacterized protein (608 aa).

Residues 4-24 (LIFMALLMSLLFIGTVFGYGD) traverse the membrane as a helical segment.

To M.jannaschii MJ1394 and A.fulgidus AF2028.

It is found in the membrane. This is an uncharacterized protein from Methanocaldococcus jannaschii (strain ATCC 43067 / DSM 2661 / JAL-1 / JCM 10045 / NBRC 100440) (Methanococcus jannaschii).